The sequence spans 433 residues: Transcription factor TCP18 (433 aa).

Disordered stretches follow at residues 130 to 163 and 247 to 281; these read QRIS…GTRD and DDRG…RTPI. Positions 148-206 constitute a TCP domain; sequence RTDRHSKIKTAKGTRDRRMRLSLDVAKELFGLQDMLGFDKASKTVEWLLTQAKPEIIKI. A R domain is found at 287–304; the sequence is KEERAKARERAKGRTMEK.

In terms of tissue distribution, expressed in unelongated axillary buds, and, to a lower extent, in axillary structures such as flowers and siliques.

It localises to the nucleus. Its function is as follows. Transcription factor that prevents axillary bud outgrowth and delays early axillary bud development. Indirectly required for the auxin-induced control of apical dominance. The chain is Transcription factor TCP18 from Arabidopsis thaliana (Mouse-ear cress).